A 791-amino-acid chain; its full sequence is Major facilitator superfamily domain-containing protein 6 (791 aa).

The residue at position 2 (A2) is an N-acetylalanine. T10 bears the Phosphothreonine mark. The tract at residues 22-47 (LADPFNGISREPEPPSNETPSSTETS) is disordered. Low complexity predominate over residues 37–47 (SNETPSSTETS). A run of 6 helical transmembrane segments spans residues 73–93 (VFYF…PVYY), 105–125 (LLVG…GVVA), 132–152 (KIVL…IGFV), 286–306 (AIFL…ASSV), 335–355 (WGLA…EVLI), and 369–389 (QIVF…ATQF). Positions 407–427 (EIPQVERNNSTESSEETPTTT) are disordered. Low complexity predominate over residues 416 to 427 (STESSEETPTTT). 6 helical membrane-spanning segments follow: residues 450 to 470 (VLFV…FLYW), 479 to 499 (TTLF…AYFF), 507 to 527 (IGHI…YIYI), 544 to 564 (GVTH…AVPP), 579 to 599 (LGLG…YFGA), and 605 to 625 (GIGM…WLAV). Disordered regions lie at residues 662–687 (MPRI…NKPA) and 723–791 (LQGT…AGGH). Positions 750–768 (SRNQPSPDAAASQTQTSPA) are enriched in polar residues. Low complexity predominate over residues 782–791 (QQAQLAAGGH).

The protein belongs to the major facilitator superfamily. MFSD6 family. As to quaternary structure, may interact with HLA-B62. As to expression, widely expressed. Expression levels in peripheral blood mononuclear cells are highly variable between individuals, including no expression at all.

The protein resides in the membrane. The chain is Major facilitator superfamily domain-containing protein 6 (MFSD6) from Homo sapiens (Human).